The following is a 219-amino-acid chain: Thiamine-phosphate synthase (219 aa).

4-amino-2-methyl-5-(diphosphooxymethyl)pyrimidine is bound by residues 48-52 (QFRQK) and Asn-84. Asp-85 and Asp-104 together coordinate Mg(2+). Ser-123 lines the 4-amino-2-methyl-5-(diphosphooxymethyl)pyrimidine pocket. 150–152 (TQS) lines the 2-[(2R,5Z)-2-carboxy-4-methylthiazol-5(2H)-ylidene]ethyl phosphate pocket. Residue Lys-153 coordinates 4-amino-2-methyl-5-(diphosphooxymethyl)pyrimidine. 2-[(2R,5Z)-2-carboxy-4-methylthiazol-5(2H)-ylidene]ethyl phosphate is bound by residues Gly-181 and 199–200 (IS).

This sequence belongs to the thiamine-phosphate synthase family. Mg(2+) is required as a cofactor.

The enzyme catalyses 2-[(2R,5Z)-2-carboxy-4-methylthiazol-5(2H)-ylidene]ethyl phosphate + 4-amino-2-methyl-5-(diphosphooxymethyl)pyrimidine + 2 H(+) = thiamine phosphate + CO2 + diphosphate. It carries out the reaction 2-(2-carboxy-4-methylthiazol-5-yl)ethyl phosphate + 4-amino-2-methyl-5-(diphosphooxymethyl)pyrimidine + 2 H(+) = thiamine phosphate + CO2 + diphosphate. The catalysed reaction is 4-methyl-5-(2-phosphooxyethyl)-thiazole + 4-amino-2-methyl-5-(diphosphooxymethyl)pyrimidine + H(+) = thiamine phosphate + diphosphate. It participates in cofactor biosynthesis; thiamine diphosphate biosynthesis; thiamine phosphate from 4-amino-2-methyl-5-diphosphomethylpyrimidine and 4-methyl-5-(2-phosphoethyl)-thiazole: step 1/1. Its function is as follows. Condenses 4-methyl-5-(beta-hydroxyethyl)thiazole monophosphate (THZ-P) and 2-methyl-4-amino-5-hydroxymethyl pyrimidine pyrophosphate (HMP-PP) to form thiamine monophosphate (TMP). The polypeptide is Thiamine-phosphate synthase (Helicobacter pylori (strain Shi470)).